The following is a 143-amino-acid chain: Large ribosomal subunit protein uL11 (143 aa).

Belongs to the universal ribosomal protein uL11 family. As to quaternary structure, part of the ribosomal stalk of the 50S ribosomal subunit. Interacts with L10 and the large rRNA to form the base of the stalk. L10 forms an elongated spine to which L12 dimers bind in a sequential fashion forming a multimeric L10(L12)X complex. One or more lysine residues are methylated.

Functionally, forms part of the ribosomal stalk which helps the ribosome interact with GTP-bound translation factors. The protein is Large ribosomal subunit protein uL11 of Pseudomonas paraeruginosa (strain DSM 24068 / PA7) (Pseudomonas aeruginosa (strain PA7)).